We begin with the raw amino-acid sequence, 427 residues long: Serine--tRNA ligase (427 aa).

233–235 (TAE) serves as a coordination point for L-serine. 264–266 (RSE) is a binding site for ATP. Glu-287 contributes to the L-serine binding site. 351–354 (EISS) provides a ligand contact to ATP. Residue Ser-386 coordinates L-serine.

Belongs to the class-II aminoacyl-tRNA synthetase family. Type-1 seryl-tRNA synthetase subfamily. As to quaternary structure, homodimer. The tRNA molecule binds across the dimer.

It localises to the cytoplasm. It carries out the reaction tRNA(Ser) + L-serine + ATP = L-seryl-tRNA(Ser) + AMP + diphosphate + H(+). The catalysed reaction is tRNA(Sec) + L-serine + ATP = L-seryl-tRNA(Sec) + AMP + diphosphate + H(+). It participates in aminoacyl-tRNA biosynthesis; selenocysteinyl-tRNA(Sec) biosynthesis; L-seryl-tRNA(Sec) from L-serine and tRNA(Sec): step 1/1. Functionally, catalyzes the attachment of serine to tRNA(Ser). Is also able to aminoacylate tRNA(Sec) with serine, to form the misacylated tRNA L-seryl-tRNA(Sec), which will be further converted into selenocysteinyl-tRNA(Sec). The sequence is that of Serine--tRNA ligase from Thiobacillus denitrificans (strain ATCC 25259 / T1).